Reading from the N-terminus, the 172-residue chain is Peptide methionine sulfoxide reductase MsrA 1 (172 aa).

Residue C14 is part of the active site.

The protein belongs to the MsrA Met sulfoxide reductase family.

It carries out the reaction L-methionyl-[protein] + [thioredoxin]-disulfide + H2O = L-methionyl-(S)-S-oxide-[protein] + [thioredoxin]-dithiol. It catalyses the reaction [thioredoxin]-disulfide + L-methionine + H2O = L-methionine (S)-S-oxide + [thioredoxin]-dithiol. Functionally, has an important function as a repair enzyme for proteins that have been inactivated by oxidation. Catalyzes the reversible oxidation-reduction of methionine sulfoxide in proteins to methionine. The chain is Peptide methionine sulfoxide reductase MsrA 1 (msrA1) from Mesorhizobium japonicum (strain LMG 29417 / CECT 9101 / MAFF 303099) (Mesorhizobium loti (strain MAFF 303099)).